A 325-amino-acid polypeptide reads, in one-letter code: MAQMTMVQAINDALKTELKNDQDVLIFGEDVGVNGGVFRVTEGLQKEFGEDRVFDTPLAESGIGGLAMGLAVEGFRPVMEVQFLGFVFEVFDAIAGQIARTRFRSGGTKTAPVTIRSPFGGGVHTPELHADNLEGILAQSPGLKVVIPSGPYDAKGLLISSIRSNDPVVYLEHMKLYRSFREEVPEEEYTIDIGKANVKKEGNDISIITYGAMVQESMKAAEELEKDGYSVEVIDLRTVQPIDVDTIVASVEKTGRAVVVQEAQRQAGVGAAVVAELSERAILSLEAPIGRVAAADTIYPFTQAENVWLPNKNDIIEKAKETLEF.

Glu-60 provides a ligand contact to thiamine diphosphate.

As to quaternary structure, heterodimer of an alpha and a beta chain. It depends on thiamine diphosphate as a cofactor.

The enzyme catalyses N(6)-[(R)-lipoyl]-L-lysyl-[protein] + pyruvate + H(+) = N(6)-[(R)-S(8)-acetyldihydrolipoyl]-L-lysyl-[protein] + CO2. The pyruvate dehydrogenase complex catalyzes the overall conversion of pyruvate to acetyl-CoA and CO(2). It contains multiple copies of three enzymatic components: pyruvate dehydrogenase (E1), dihydrolipoamide acetyltransferase (E2) and lipoamide dehydrogenase (E3). In Staphylococcus aureus (strain Mu50 / ATCC 700699), this protein is Pyruvate dehydrogenase E1 component subunit beta (pdhB).